The sequence spans 551 residues: MATVRQSDGVAANGLAVAAAANGKSNGHGVAAAVNGKSNGHGVDADANGKSNGHGVAADANGKSNGHAEATANGHGEATANGKTNGHRESNGHAEAADANGESNEHAEDSAANGESNGHAAAAAEEEEAVEWNFAGAKDGVLAATGANMSIRAIRYKISASVQEKGPRPVLPLAHGDPSVFPAFRTAVEAEDAVAAAVRTGQFNCYPAGVGLPAARSAVAEHLSQGVPYMLSADDVFLTAGGTQAIEVIIPVLAQTAGANILLPRPGYPNYEARAAFNRLEVRHFDLIPDKGWEIDIDSLESIADKNTTAMVIINPNNPCGSVYSYDHLSKVAEVAKRLGILVIADEVYGKLVLGSAPFIPMGVFGHITPVLSIGSLSKSWIVPGWRLGWVAVYDPRKILQETKISTSITNYLNVSTDPATFIQAALPQILENTKEDFFKAIIGLLKESSEICYKQIKENKYITCPHKPEGSMFVMVKLNLHLLEEIDDDIDFCCKLAKEESVILCPGSVLGMANWVRITFACVPSSLQDGLGRIKSFCQRNKKRNSSDDC.

The tract at residues 24–127 (KSNGHGVAAA…GHAAAAAEEE (104 aa)) is disordered. Basic and acidic residues predominate over residues 86 to 96 (GHRESNGHAEA). Low complexity predominate over residues 111-123 (AANGESNGHAAAA). Lys-379 carries the N6-(pyridoxal phosphate)lysine modification.

Belongs to the class-I pyridoxal-phosphate-dependent aminotransferase family. Pyridoxal 5'-phosphate serves as cofactor. In terms of tissue distribution, expressed in roots, but not in leaves.

The enzyme catalyses nicotianamine + 2-oxoglutarate = 3''-deamino-3''-oxonicotianamine + L-glutamate. Functionally, involved in biosynthesis of mugineic acid family phytosiderophores. The chain is Nicotianamine aminotransferase B from Hordeum vulgare (Barley).